Consider the following 879-residue polypeptide: Bifunctional uridylyltransferase/uridylyl-removing enzyme (879 aa).

Residues 1–340 (MANVQEDKDF…GTQDLQHAEH (340 aa)) form a uridylyltransferase region. The uridylyl-removing stretch occupies residues 341-700 (ISDDFAVANK…IGDENNYGTT (360 aa)). The HD domain occupies 458–580 (VDEHTFRLVR…VSTPERLDYL (123 aa)). ACT domains are found at residues 701–782 (ELFI…STKR) and 809–879 (TFEL…DLEF).

The protein belongs to the GlnD family. Mg(2+) serves as cofactor.

The catalysed reaction is [protein-PII]-L-tyrosine + UTP = [protein-PII]-uridylyl-L-tyrosine + diphosphate. The enzyme catalyses [protein-PII]-uridylyl-L-tyrosine + H2O = [protein-PII]-L-tyrosine + UMP + H(+). With respect to regulation, uridylyltransferase (UTase) activity is inhibited by glutamine, while glutamine activates uridylyl-removing (UR) activity. Its function is as follows. Modifies, by uridylylation and deuridylylation, the PII regulatory proteins (GlnB and homologs), in response to the nitrogen status of the cell that GlnD senses through the glutamine level. Under low glutamine levels, catalyzes the conversion of the PII proteins and UTP to PII-UMP and PPi, while under higher glutamine levels, GlnD hydrolyzes PII-UMP to PII and UMP (deuridylylation). Thus, controls uridylylation state and activity of the PII proteins, and plays an important role in the regulation of nitrogen assimilation and metabolism. The sequence is that of Bifunctional uridylyltransferase/uridylyl-removing enzyme from Idiomarina loihiensis (strain ATCC BAA-735 / DSM 15497 / L2-TR).